A 620-amino-acid chain; its full sequence is Dihydroxy-acid dehydratase (620 aa).

Residue aspartate 82 participates in Mg(2+) binding. Cysteine 123 provides a ligand contact to [2Fe-2S] cluster. The Mg(2+) site is built by aspartate 124 and lysine 125. Position 125 is an N6-carboxylysine (lysine 125). Cysteine 197 is a binding site for [2Fe-2S] cluster. Mg(2+) is bound at residue glutamate 493. Residue serine 519 is the Proton acceptor of the active site.

It belongs to the IlvD/Edd family. Homodimer. [2Fe-2S] cluster serves as cofactor. The cofactor is Mg(2+).

It carries out the reaction (2R)-2,3-dihydroxy-3-methylbutanoate = 3-methyl-2-oxobutanoate + H2O. The catalysed reaction is (2R,3R)-2,3-dihydroxy-3-methylpentanoate = (S)-3-methyl-2-oxopentanoate + H2O. It participates in amino-acid biosynthesis; L-isoleucine biosynthesis; L-isoleucine from 2-oxobutanoate: step 3/4. Its pathway is amino-acid biosynthesis; L-valine biosynthesis; L-valine from pyruvate: step 3/4. Its function is as follows. Functions in the biosynthesis of branched-chain amino acids. Catalyzes the dehydration of (2R,3R)-2,3-dihydroxy-3-methylpentanoate (2,3-dihydroxy-3-methylvalerate) into 2-oxo-3-methylpentanoate (2-oxo-3-methylvalerate) and of (2R)-2,3-dihydroxy-3-methylbutanoate (2,3-dihydroxyisovalerate) into 2-oxo-3-methylbutanoate (2-oxoisovalerate), the penultimate precursor to L-isoleucine and L-valine, respectively. The protein is Dihydroxy-acid dehydratase of Bifidobacterium longum subsp. infantis (strain ATCC 15697 / DSM 20088 / JCM 1222 / NCTC 11817 / S12).